The chain runs to 103 residues: Vesicle-associated membrane protein 3 (103 aa).

The interval 1 to 25 is disordered; sequence MSTGVPSGSSAATGSNRRLQQTQNQ. Residues 1 to 81 are Cytoplasmic-facing; sequence MSTGVPSGSS…KRKYWWKNCK (81 aa). The 61-residue stretch at 18–78 folds into the v-SNARE coiled-coil homology domain; sequence RLQQTQNQVD…AKLKRKYWWK (61 aa). Residues Lys-70, Lys-72, and Lys-81 each participate in a glycyl lysine isopeptide (Lys-Gly) (interchain with G-Cter in ubiquitin) cross-link. A helical; Anchor for type IV membrane protein transmembrane segment spans residues 82–102; that stretch reads MWAIGISVLVIIVIIIIVWCV. Position 103 (Ser-103) is a topological domain, vesicular.

This sequence belongs to the synaptobrevin family. As to quaternary structure, interacts with POPDC1 (via the C-terminus cytoplasmic tail). Interacts with BCAP31; involved in VAMP3 export from the endoplasmic reticulum. Interacts with BAIAP3; this interaction is increased in the presence of calcium. Interacts with PICALM. Post-translationally, ubiquitinated by RNF167 at Lys-70, Lys-72 and Lys-81, regulating the recycling endosome pathway. In terms of processing, (Microbial infection) Targeted and hydrolyzed by C.botulinum neurotoxin type D (BoNT/D, botD) which hydrolyzes the 46-Lys-|-Leu-47 bond and probably inhibits neurotransmitter release. (Microbial infection) Targeted and hydrolyzed by C.botulinum neurotoxin type F (BoNT/F, botF) which hydrolyzes the 45-Gln-|-Lys-46 bond and probably inhibits neurotransmitter release. Post-translationally, (Microbial infection) Targeted and hydrolyzed by C.tetani toxin (tetX) which hydrolyzes the 63-Gln-|-Phe-64 bond and probably inhibits neurotransmitter release. In terms of tissue distribution, ubiquitous.

The protein localises to the early endosome membrane. Its subcellular location is the recycling endosome membrane. The protein resides in the synapse. It is found in the synaptosome. Functionally, SNARE involved in vesicular transport from the late endosomes to the trans-Golgi network. The sequence is that of Vesicle-associated membrane protein 3 (Vamp3) from Rattus norvegicus (Rat).